We begin with the raw amino-acid sequence, 158 residues long: Transcription elongation factor GreA (158 aa).

A coiled-coil region spans residues 53–73 (EQQGFIEGRIKEIEAKLSNAQ).

This sequence belongs to the GreA/GreB family.

Functionally, necessary for efficient RNA polymerase transcription elongation past template-encoded arresting sites. The arresting sites in DNA have the property of trapping a certain fraction of elongating RNA polymerases that pass through, resulting in locked ternary complexes. Cleavage of the nascent transcript by cleavage factors such as GreA or GreB allows the resumption of elongation from the new 3'terminus. GreA releases sequences of 2 to 3 nucleotides. This is Transcription elongation factor GreA from Thioalkalivibrio sulfidiphilus (strain HL-EbGR7).